A 427-amino-acid chain; its full sequence is 3-phosphoshikimate 1-carboxyvinyltransferase (427 aa).

Residues Lys-22, Ser-23, and Arg-27 each coordinate 3-phosphoshikimate. Residue Lys-22 participates in phosphoenolpyruvate binding. Positions 96 and 124 each coordinate phosphoenolpyruvate. The 3-phosphoshikimate site is built by Ser-169, Ser-170, Gln-171, Ser-197, Asp-313, Asn-336, and Lys-340. Residue Gln-171 coordinates phosphoenolpyruvate. Catalysis depends on Asp-313, which acts as the Proton acceptor. The phosphoenolpyruvate site is built by Arg-344, Arg-386, and Lys-411.

The protein belongs to the EPSP synthase family. In terms of assembly, monomer.

The protein localises to the cytoplasm. The catalysed reaction is 3-phosphoshikimate + phosphoenolpyruvate = 5-O-(1-carboxyvinyl)-3-phosphoshikimate + phosphate. Its pathway is metabolic intermediate biosynthesis; chorismate biosynthesis; chorismate from D-erythrose 4-phosphate and phosphoenolpyruvate: step 6/7. In terms of biological role, catalyzes the transfer of the enolpyruvyl moiety of phosphoenolpyruvate (PEP) to the 5-hydroxyl of shikimate-3-phosphate (S3P) to produce enolpyruvyl shikimate-3-phosphate and inorganic phosphate. The polypeptide is 3-phosphoshikimate 1-carboxyvinyltransferase (Salmonella heidelberg (strain SL476)).